Reading from the N-terminus, the 442-residue chain is Tubby-related protein 3 (442 aa).

The segment at 23-68 (MRQAKLDYQRLLLEKRQRKKRLEPFMVQPNPEARLRRAKPRASDEQ) is required for association with the IFT complex A (IFT-A). The segment at 101–177 (PSVSSSVVEE…TSGSATAAQP (77 aa)) is disordered. Residues 145-162 (GISQSACLERPNSASSQN) are compositionally biased toward polar residues. Positions 163 to 175 (STDTGTSGSATAA) are enriched in low complexity.

Belongs to the TUB family. As to quaternary structure, associates with the IFT complex A (IFT-A). Interacts with SIRT1. As to expression, expressed at high levels in testis, ovaries, thyroid, and spinal cord.

It localises to the nucleus. It is found in the cell membrane. The protein localises to the cell projection. The protein resides in the cilium. Its subcellular location is the cytoplasm. It localises to the secreted. Its function is as follows. Negative regulator of the Shh signaling transduction pathway: recruited to primary cilia via association with the IFT complex A (IFT-A) and is required for recruitment of G protein-coupled receptor GPR161 to cilia, a promoter of PKA-dependent basal repression machinery in Shh signaling. Binds to phosphorylated inositide (phosphoinositide) lipids. Both IFT-A- and phosphoinositide-binding properties are required to regulate ciliary G protein-coupled receptor trafficking. During adipogenesis, regulates ciliary trafficking of FFAR4 in preadipocytes. This is Tubby-related protein 3 from Homo sapiens (Human).